We begin with the raw amino-acid sequence, 852 residues long: Kinesin-like protein KIF18B (852 aa).

Residues 7 to 351 form the Kinesin motor domain; sequence TLQVVVRVRP…LKYADRAKEI (345 aa). Residue 109-116 participates in ATP binding; the sequence is GATGAGKT. Residues 366–393 are a coiled coil; the sequence is ISQYATICQQLQAEVAALRKKLQVYEGG. Disordered stretches follow at residues 390-424 and 437-485; these read YEGG…PAGP and QVER…RLTL. A Phosphoserine modification is found at serine 404. Threonine 417 carries the post-translational modification Phosphothreonine. Acidic residues predominate over residues 451 to 461; sequence QSPEDEDEGPA. Serine 452, serine 480, and serine 558 each carry phosphoserine. Disordered stretches follow at residues 575 to 594 and 602 to 689; these read IPVP…PVTR and GPLH…SPRV. The span at 577–588 shows a compositional bias: pro residues; that stretch reads VPSPLCPEPPGY. Residues 624 to 632 carry the Nuclear localization signal motif; it reads PMEKKRRRP. Residues serine 633 and serine 639 each carry the phosphoserine modification. The short motif at 653-656 is the MAPRE1-binding element; sequence SFLP. At serine 662 the chain carries Phosphoserine. A compositionally biased stretch (polar residues) spans 664–673; the sequence is PDTQPSQGPS. Threonine 674 is modified (phosphothreonine). Positions 711–736 are KIF2C-binding; that stretch reads TPLALPTRDLNATFDLSEEPPSKPSF. Residues 767–798 are disordered; that stretch reads MKGPKPTSSLPGTSACKKKRVASSSVSHGRSR. 2 consecutive short sequence motifs (MAPRE1-binding) follow at residues 774-777 and 800-803; these read SSLP and ARLP. Phosphoserine is present on serine 822.

Belongs to the TRAFAC class myosin-kinesin ATPase superfamily. Kinesin family. Interacts with MAPRE1; this interaction is required for efficient accumulation at microtubule plus ends. Interacts with KIF2C at microtubule tips; this interaction increases the affinity of both partners for microtubule plus ends and is required for robust microtubule depolymerization. KIF2C phosphorylation by AURKA or AURKB strongly reduces KIF18B-binding. In terms of tissue distribution, shows a prominent expression in the amygdala.

The protein localises to the nucleus. Its subcellular location is the cytoplasm. It is found in the cytoskeleton. In complex with KIF2C, constitutes the major microtubule plus-end depolymerizing activity in mitotic cells. Its major role may be to transport KIF2C and/or MAPRE1 along microtubules. In Homo sapiens (Human), this protein is Kinesin-like protein KIF18B (KIF18B).